The chain runs to 231 residues: MSVTLALPSKGRLKEKTLAVLEKAGYKVVLPDDDRNYRARVEGEDDLDILFLSASEIARELGYGSVDLGVTGEDLVRETLAHADERVAIEAQLGFGHADVVVAVPEVWRDVTTMADLDDVAADFRQRHGRRLRIATKYWRLTQQFFSQKHGIQVYRIVESLGATEGAPAAGSADMIVDITSTGSTLRANRLKVLEDGIILRSQACLVSARRSHTSRRVEEIAARIRAGLEI.

It belongs to the ATP phosphoribosyltransferase family. Short subfamily. Heteromultimer composed of HisG and HisZ subunits.

Its subcellular location is the cytoplasm. The catalysed reaction is 1-(5-phospho-beta-D-ribosyl)-ATP + diphosphate = 5-phospho-alpha-D-ribose 1-diphosphate + ATP. Its pathway is amino-acid biosynthesis; L-histidine biosynthesis; L-histidine from 5-phospho-alpha-D-ribose 1-diphosphate: step 1/9. In terms of biological role, catalyzes the condensation of ATP and 5-phosphoribose 1-diphosphate to form N'-(5'-phosphoribosyl)-ATP (PR-ATP). Has a crucial role in the pathway because the rate of histidine biosynthesis seems to be controlled primarily by regulation of HisG enzymatic activity. This chain is ATP phosphoribosyltransferase, found in Brucella suis (strain ATCC 23445 / NCTC 10510).